A 519-amino-acid chain; its full sequence is C-glycoside 3-oxidase (519 aa).

E41 provides a ligand contact to FAD. Residues G43–A93 form a disordered region. Positions K55–S64 are enriched in basic and acidic residues. Positions 118, 120, 124, 129, 131, and 234 each coordinate FAD. H440 acts as the Proton acceptor in catalysis. N474 and T486 together coordinate FAD.

The protein belongs to the GMC oxidoreductase family. Monomer. Requires FAD as cofactor.

The enzyme catalyses isovitexin + O2 = 3''-dehydroisovitexin + H2O2. It carries out the reaction isoorientin + O2 = 3''-dehydroisoorientin + H2O2. The catalysed reaction is mangiferin + O2 = 3'-dehydromangiferin + H2O2. Its function is as follows. FAD-dependent C-glycoside-metabolizing enzyme that participates in the degradation of certain C-glycosides by catalyzing the oxidation of the hydroxyl group at the C3 position of the sugar moiety. Shows oxidase activity toward various C-glycosides such as isovitexin, isoorientin and mangiferin but cannot use carminic acid, puerarin, orientin or aloesin. Shows weak activity (100 to 1000-fold lower) with O-glycosides. Probably plays a crucial role in the metabolism of C-glycosides in nature. The sequence is that of C-glycoside 3-oxidase from Arthrobacter globiformis (strain ATCC 8010 / DSM 20124 / JCM 1332 / NBRC 12137 / NCIMB 8907 / NRRL B-2979 / 168).